The following is a 219-amino-acid chain: Ran-specific GTPase-activating protein 1 (219 aa).

Composition is skewed to basic and acidic residues over residues 1–12, 33–45, and 57–72; these read MAEVERKEEQAK, AVGDGKEGGEAKK, and PRKDEGKGGEERDNID. Residues 1 to 72 are disordered; it reads MAEVERKEEQ…KGGEERDNID (72 aa). A RanBD1 domain is found at 70 to 210; it reads NIDAAEVVEK…YDLGRAHNEK (141 aa).

This sequence belongs to the RANBP1 family.

It is found in the cytoplasm. The protein localises to the nucleus. In terms of biological role, important for the export of protein containing nuclear export signal (NES) out of the nucleus. The chain is Ran-specific GTPase-activating protein 1 (YRB1) from Encephalitozoon cuniculi (strain GB-M1) (Microsporidian parasite).